Consider the following 548-residue polypeptide: MKKVTAMLFSMAVGLNAVSMAAKAKASEEQETDVLLIGGGIMSATLGTYLRELEPEWSMTMVERLEGVAQESSNGWNNAGTGHSALMELNYTPQNADGSISIEKAVAINEAFQISRQFWAHQVERGVLRTPRSFINTVPHMSFVWGEDNVNFLRARYAALQQSSLFRGMRYSEDHAQIKEWAPLVMEGRDPQQKVAATRTEMGTDVNYGEITRQLIASLQKKSNFSLQLSSEVRALKRNDDNTWTVTVADLKNGTAQNIRAKFVFIGAGGAALKLLQESGIPEAKDYAGFPVGGQFLVSENPDVVNHHLAKVYGKASVGAPPMSVPHIDTRVLDGKRVVLFGPFATFSTKFLKNGSLWDLMSSTTTSNVMPMMHVGLDNFDLVKYLVSQVMLSEEDRFEALKEYYPQAKKEDWRLWQAGQRVQIIKRDAEKGGVLRLGTEVVSDQQGTIAALLGASPGASTAAPIMLDLLEKVFGDRVSSPQWQATLKAIVPSYGRKLNGDVAATERELQYTSEVLGLKYDKPQAADSTPKPQLKPQPVQKEVADIAL.

Residues 521 to 548 form a disordered region; sequence DKPQAADSTPKPQLKPQPVQKEVADIAL. Over residues 530-541 the composition is skewed to low complexity; that stretch reads PKPQLKPQPVQK.

This sequence belongs to the MQO family. The cofactor is FAD.

The enzyme catalyses (S)-malate + a quinone = a quinol + oxaloacetate. The protein operates within carbohydrate metabolism; tricarboxylic acid cycle; oxaloacetate from (S)-malate (quinone route): step 1/1. The sequence is that of Probable malate:quinone oxidoreductase from Escherichia coli (strain 55989 / EAEC).